The primary structure comprises 241 residues: MSEEKNDALVGEVNTDNADNQVWLIKVPKFLSESWQKIGQGEIGQIHIKGGDNISLSYGPDVGQEFQLITTANTLDNQPLKIFSEDKDGALALEGNIGLRCDIKIDVESPQYRDLMKSRHTKYNTKTRMTQVIDESELFTPTLFDANKVKVSTVGITQKKKSTDKKEKLPEDEVLDLIFSAFRAEKHLDLKTLESFTEQPKNHLKTILEKVCILNKRGPYHHLYELKPEFRDKDNSKDEKK.

It belongs to the TFIIF beta subunit family. Heterodimer of an alpha and a beta subunit.

It localises to the nucleus. TFIIF is a general transcription initiation factor that binds to RNA polymerase II and helps to recruit it to the initiation complex in collaboration with TFIIB. The protein is General transcription factor IIF subunit 2 (gtf2f2) of Dictyostelium discoideum (Social amoeba).